Here is a 335-residue protein sequence, read N- to C-terminus: MDRIVEIEKYSLDETYETSLRPSNFDGYIGQESIKKNLNIFITAAKKRNECLDHILFSGPAGLGKTTLANIISYEMDANIKTTAAPMIEKSGDLAAILTNLSEGDILFIDEIHRLSPAIEEVLYPAMEDYRLDIIIGSGPAAQTIKIDLPKFTLIGATTRAGMLSNPLRDRFGMQFRLEFYKDSELALILQKAALKLNKTCEEKAALEIAKRSRSTPRIALRLLKRVRDFADVNDEEIITEKRANEALNSLGVNELGFDAMDLRYLELLTAAKQKPIGLASIAAALSEDENTIEDVIEPYLLANGYIERTAKGRIASTKSYSALKLNYEKTLFEE.

Positions 1-181 are large ATPase domain (RuvB-L); it reads MDRIVEIEKY…FGMQFRLEFY (181 aa). ATP contacts are provided by residues leucine 20, arginine 21, glycine 62, lysine 65, threonine 66, threonine 67, 128 to 130, arginine 171, tyrosine 181, and arginine 218; that span reads EDY. Threonine 66 is a binding site for Mg(2+). Residues 182-252 form a small ATPAse domain (RuvB-S) region; that stretch reads KDSELALILQ…RANEALNSLG (71 aa). Residues 255 to 335 are head domain (RuvB-H); sequence ELGFDAMDLR…LNYEKTLFEE (81 aa). DNA-binding residues include arginine 309 and arginine 314.

The protein belongs to the RuvB family. Homohexamer. Forms an RuvA(8)-RuvB(12)-Holliday junction (HJ) complex. HJ DNA is sandwiched between 2 RuvA tetramers; dsDNA enters through RuvA and exits via RuvB. An RuvB hexamer assembles on each DNA strand where it exits the tetramer. Each RuvB hexamer is contacted by two RuvA subunits (via domain III) on 2 adjacent RuvB subunits; this complex drives branch migration. In the full resolvosome a probable DNA-RuvA(4)-RuvB(12)-RuvC(2) complex forms which resolves the HJ.

The protein resides in the cytoplasm. It carries out the reaction ATP + H2O = ADP + phosphate + H(+). The RuvA-RuvB-RuvC complex processes Holliday junction (HJ) DNA during genetic recombination and DNA repair, while the RuvA-RuvB complex plays an important role in the rescue of blocked DNA replication forks via replication fork reversal (RFR). RuvA specifically binds to HJ cruciform DNA, conferring on it an open structure. The RuvB hexamer acts as an ATP-dependent pump, pulling dsDNA into and through the RuvAB complex. RuvB forms 2 homohexamers on either side of HJ DNA bound by 1 or 2 RuvA tetramers; 4 subunits per hexamer contact DNA at a time. Coordinated motions by a converter formed by DNA-disengaged RuvB subunits stimulates ATP hydrolysis and nucleotide exchange. Immobilization of the converter enables RuvB to convert the ATP-contained energy into a lever motion, pulling 2 nucleotides of DNA out of the RuvA tetramer per ATP hydrolyzed, thus driving DNA branch migration. The RuvB motors rotate together with the DNA substrate, which together with the progressing nucleotide cycle form the mechanistic basis for DNA recombination by continuous HJ branch migration. Branch migration allows RuvC to scan DNA until it finds its consensus sequence, where it cleaves and resolves cruciform DNA. This Campylobacter jejuni subsp. doylei (strain ATCC BAA-1458 / RM4099 / 269.97) protein is Holliday junction branch migration complex subunit RuvB.